The chain runs to 321 residues: Thioredoxin reductase (321 aa).

Residue 36 to 43 (TGMEKGGQ) participates in FAD binding. Cys136 and Cys139 form a disulfide bridge. Residue 287–296 (DVMDHIYRQA) participates in FAD binding.

Belongs to the class-II pyridine nucleotide-disulfide oxidoreductase family. In terms of assembly, homodimer. FAD serves as cofactor.

The protein resides in the cytoplasm. The enzyme catalyses [thioredoxin]-dithiol + NADP(+) = [thioredoxin]-disulfide + NADPH + H(+). The chain is Thioredoxin reductase (trxB) from Escherichia coli O157:H7.